Consider the following 702-residue polypeptide: Elongation factor G (702 aa).

One can recognise a tr-type G domain in the interval 8 to 286; the sequence is DKVRNIGIIA…AVVEYLPSPL (279 aa). GTP is bound by residues 17-24, 85-89, and 139-142; these read AHIDAGKT, DTPGH, and NKMD.

The protein belongs to the TRAFAC class translation factor GTPase superfamily. Classic translation factor GTPase family. EF-G/EF-2 subfamily.

It localises to the cytoplasm. Functionally, catalyzes the GTP-dependent ribosomal translocation step during translation elongation. During this step, the ribosome changes from the pre-translocational (PRE) to the post-translocational (POST) state as the newly formed A-site-bound peptidyl-tRNA and P-site-bound deacylated tRNA move to the P and E sites, respectively. Catalyzes the coordinated movement of the two tRNA molecules, the mRNA and conformational changes in the ribosome. The protein is Elongation factor G of Chloroflexus aurantiacus (strain ATCC 29366 / DSM 635 / J-10-fl).